The following is a 96-amino-acid chain: UPF0235 protein YPK_0828 (96 aa).

Belongs to the UPF0235 family.

The chain is UPF0235 protein YPK_0828 from Yersinia pseudotuberculosis serotype O:3 (strain YPIII).